An 823-amino-acid polypeptide reads, in one-letter code: High affinity cAMP-specific and IBMX-insensitive 3',5'-cyclic phosphodiesterase 8A (823 aa).

The interval 1-55 is disordered; sequence MGCAPSIHTSENRTFSHSDGEDEDVDVDVPGPAPRSIQRWSTAPGLVEPQPRDNG. The span at 10 to 19 shows a compositional bias: basic and acidic residues; that stretch reads SENRTFSHSD. One can recognise a PAS domain in the interval 209 to 280; the sequence is ACNSVFTALE…AINSCVTVDK (72 aa). A PAC domain is found at 283 to 325; that stretch reads QGVYHTQKKNGDNIQQNVKIIPVIGQGGKIRHYVSIIRVCNGN. Residues 338 to 373 are disordered; it reads DSQTDNQAGKHKDRRKHSMDAKAVSSRTSDVSSQRR. At serine 355 the chain carries Phosphoserine; by PKA. 2 positions are modified to phosphoserine: serine 382 and serine 452. Phosphotyrosine is present on tyrosine 456. Positions 475–814 constitute a PDEase domain; that stretch reads SLHDVPPRIA…RYWKGLDEKK (340 aa). Histidine 551 (proton donor) is an active-site residue. Positions 555, 591, 592, and 720 each coordinate a divalent metal cation.

This sequence belongs to the cyclic nucleotide phosphodiesterase family. PDE8 subfamily. As to quaternary structure, interacts with RAF1. The interaction promotes RAF1 activity. A divalent metal cation serves as cofactor. In terms of processing, phosphorylated at Ser-355 by PKA under elevated cAMP conditions, this enhances catalytic activity. As to expression, expressed in multiple tissues, with highest levels in testis, followed by liver, heart, skeletal muscle, and kidney. In the testis, expressed specifically in the seminiferous tubules, in postmitotic pachytene spermatocytes. Low expression, if any, in lung, smooth muscle, pancreas, thyroid, thymus, submaxillary gland, spleen, prostate, epididymus, uterus.

The enzyme catalyses 3',5'-cyclic AMP + H2O = AMP + H(+). Its pathway is purine metabolism; 3',5'-cyclic AMP degradation; AMP from 3',5'-cyclic AMP: step 1/1. With respect to regulation, inhibited by dipyridimole. Insensitive to selective PDE inhibitor rolipram and to the non-selective inhibitor, IBMX. In terms of biological role, hydrolyzes the second messenger cAMP, which is a key regulator of many important physiological processes. May be involved in maintaining basal levels of the cyclic nucleotide and/or in the cAMP regulation of germ cell development. Binding to RAF1 reduces RAF1 'Ser-259' inhibitory-phosphorylation and stimulates RAF1-dependent EGF-activated ERK-signaling. Protects against cell death induced by hydrogen peroxide and staurosporine. The protein is High affinity cAMP-specific and IBMX-insensitive 3',5'-cyclic phosphodiesterase 8A (Pde8a) of Mus musculus (Mouse).